The following is a 144-amino-acid chain: Large ribosomal subunit protein uL11 (144 aa).

This sequence belongs to the universal ribosomal protein uL11 family. In terms of assembly, part of the ribosomal stalk of the 50S ribosomal subunit. Interacts with L10 and the large rRNA to form the base of the stalk. L10 forms an elongated spine to which L12 dimers bind in a sequential fashion forming a multimeric L10(L12)X complex. Post-translationally, one or more lysine residues are methylated.

Forms part of the ribosomal stalk which helps the ribosome interact with GTP-bound translation factors. The chain is Large ribosomal subunit protein uL11 from Legionella pneumophila (strain Paris).